Reading from the N-terminus, the 219-residue chain is Envelope protein UL45 homolog (219 aa).

Residues 1 to 57 (MEDYKLLQLETATVDAQAPPLPTKTVPVFAPPLSTPPQPNELVYTKRRRTKRKAKCR) lie on the Intravirion side of the membrane. Residues 58–78 (CLFFTMGMFALGVLMTTAILV) form a helical; Signal-anchor for type II membrane protein membrane-spanning segment. The Virion surface portion of the chain corresponds to 79–219 (STFILTVPIG…RLDHIIPFPR (141 aa)). N113, N120, and N138 each carry an N-linked (GlcNAc...) asparagine; by host glycan.

It belongs to the herpesviridae HHV-1 UL45 family. In terms of processing, N-glycosylated.

It is found in the virion membrane. This is Envelope protein UL45 homolog from Equine herpesvirus 1 (strain Ab4p) (EHV-1).